A 508-amino-acid polypeptide reads, in one-letter code: Immunoglobulin G-binding protein A (508 aa).

Positions 1–36 are cleaved as a signal peptide; it reads MKKKNIYSIRKLGVGIASVTLGTLLISGGVTPAANA. Positions 7–18 match the YSIRK-G/S signaling motif motif; it reads YSIRKLGVGIAS. One copy of the Immunoglobulin-binding region E repeat lies at 37–92; sequence AQHDEAQQNAFYQVLNMPNLNADQRNGFIQSLKDDPSQSANVLGEAQKLNDSQAPK. One copy of the Immunoglobulin-binding region D repeat lies at 93-153; the sequence is ADAQQNNFNK…KKLNESQAPK (61 aa). Residues 154–211 form an Immunoglobulin-binding region A repeat; that stretch reads ADNNFNKEQQNAFYEILNMPNLNEEQRNGFIQSLKDDPSQSANLLSEAKKLNESQAPK. The Immunoglobulin-binding region B repeat unit spans residues 212-269; that stretch reads ADNKFNKEQQNAFYEILHLPNLNEEQRNGFIQSLKDDPSQSANLLAEAKKLNDAQAPK. The stretch at 270 to 327 is one Immunoglobulin-binding region C repeat; sequence ADNKFNKEQQNAFYEILHLPNLTEEQRNGFIQSLKDDPSVSKEILAEAKKLNDAQAPK. Over residues 318-412 the composition is skewed to basic and acidic residues; sequence KKLNDAQAPK…GNKPGKEDGN (95 aa). Disordered regions lie at residues 318 to 421 and 459 to 479; these read KKLN…KPGD and KKQPANHADANKAQALPETGE. 10 repeat units span residues 333 to 340, 341 to 348, 349 to 356, 357 to 364, 365 to 372, 373 to 380, 381 to 388, 389 to 396, 397 to 404, and 405 to 412. The tract at residues 333-412 is 10 X 8 AA approximate tandem repeats; that stretch reads KPGKEDNNKP…GNKPGKEDGN (80 aa). The region spanning 413-457 is the LysM domain; sequence GVHVVKPGDTVNDIAKANGTTADKIAADNKLADKNMIKPGQELVV. The LPXTG sorting signal signature appears at 474 to 478; sequence LPETG. Pentaglycyl murein peptidoglycan amidated threonine is present on Thr-477. A propeptide spans 478–508 (removed by sortase); the sequence is GEENPFIGTTVFGGLSLALGAALLAGRRREL.

The protein belongs to the immunoglobulin-binding protein SpA family. As to quaternary structure, interacts with host TNFRSF1A; this interaction leads to the stimulation of both surface expression and shedding of TNFRSF1A.

It localises to the secreted. Its subcellular location is the cell wall. Functionally, plays a role in the inhibition of the host innate and adaptive immune responses. Possesses five immunoglobulin-binding domains that capture both the fragment crystallizable region (Fc region) and the Fab region (part of Ig that identifies antigen) of immunoglobulins. In turn, Staphylococcus aureus is protected from phagocytic killing via inhibition of Ig Fc region. In addition, the host elicited B-cell response is prevented due to a decrease of antibody-secreting cell proliferation that enter the bone marrow, thereby decreasing long-term antibody production. Inhibits osteogenesis by preventing osteoblast proliferation and expression of alkaline phosphatase, type I collagen, osteopontin and osteocalcin. Acts directly as a pro-inflammatory factor in the lung through its ability to bind and activate tumor necrosis factor alpha receptor 1/TNFRSF1A. The protein is Immunoglobulin G-binding protein A (spa) of Staphylococcus aureus (strain Newman).